The primary structure comprises 727 residues: Procollagen-lysine,2-oxoglutarate 5-dioxygenase 1 (727 aa).

The signal sequence occupies residues 1–18 (MRPLLLLALLGWLLLAEA). 3 N-linked (GlcNAc...) asparagine glycosylation sites follow: N163, N197, and N538. One can recognise a Fe2OG dioxygenase domain in the interval 636-727 (QFDLAFVVRY…RYIAVSFVDP (92 aa)). Residues H656 and D658 each contribute to the Fe cation site. N686 carries N-linked (GlcNAc...) asparagine glycosylation. Position 708 (H708) interacts with Fe cation. The active site involves R718.

In terms of assembly, homodimer. Identified in a complex with P3H3 and P3H4. Fe(2+) is required as a cofactor. The cofactor is L-ascorbate.

It is found in the rough endoplasmic reticulum membrane. The catalysed reaction is L-lysyl-[collagen] + 2-oxoglutarate + O2 = (5R)-5-hydroxy-L-lysyl-[collagen] + succinate + CO2. In terms of biological role, part of a complex composed of PLOD1, P3H3 and P3H4 that catalyzes hydroxylation of lysine residues in collagen alpha chains and is required for normal assembly and cross-linkling of collagen fibrils. Forms hydroxylysine residues in -Xaa-Lys-Gly- sequences in collagens. These hydroxylysines serve as sites of attachment for carbohydrate units and are essential for the stability of the intermolecular collagen cross-links. The protein is Procollagen-lysine,2-oxoglutarate 5-dioxygenase 1 (PLOD1) of Homo sapiens (Human).